The primary structure comprises 215 residues: Deoxyribose-phosphate aldolase (215 aa).

Asp-89 (proton donor/acceptor) is an active-site residue. Lys-153 (schiff-base intermediate with acetaldehyde) is an active-site residue. Catalysis depends on Lys-182, which acts as the Proton donor/acceptor.

It belongs to the DeoC/FbaB aldolase family. DeoC type 1 subfamily.

It localises to the cytoplasm. It carries out the reaction 2-deoxy-D-ribose 5-phosphate = D-glyceraldehyde 3-phosphate + acetaldehyde. Its pathway is carbohydrate degradation; 2-deoxy-D-ribose 1-phosphate degradation; D-glyceraldehyde 3-phosphate and acetaldehyde from 2-deoxy-alpha-D-ribose 1-phosphate: step 2/2. Catalyzes a reversible aldol reaction between acetaldehyde and D-glyceraldehyde 3-phosphate to generate 2-deoxy-D-ribose 5-phosphate. This chain is Deoxyribose-phosphate aldolase, found in Lactiplantibacillus plantarum (strain ATCC BAA-793 / NCIMB 8826 / WCFS1) (Lactobacillus plantarum).